The following is a 1012-amino-acid chain: Structural polyprotein (1012 aa).

Aspartate 30 contacts a divalent metal cation. The Peptidase S50 domain maps to 513-755 (ADKGYEVVAN…AGRQYHLAMA (243 aa)). Catalysis depends on serine 652, which acts as the Nucleophile. The active site involves lysine 692. The tract at residues 969–1012 (AMELKHRNPRRAPPKPKPKPNAPTQRPPGRLGRWIRTVSDEDLE) is disordered. Positions 975-986 (RNPRRAPPKPKP) are enriched in basic residues. The tract at residues 1003–1012 (IRTVSDEDLE) is interaction with VP1 protein.

In terms of assembly, homotrimer. A central divalent metal stabilizes the VP2 trimer. Interacts with host ITGA4/ITGB1. Homodimer. Interacts (via C-terminus) with VP1 in the cytoplasm. Interacts with VP2. Specific enzymatic cleavages yield mature proteins. The capsid assembly seems to be regulated by polyprotein processing. The protease VP4 cleaves itself off the polyprotein, thus releasing pre-VP2 and VP3 within the infected cell. During capsid assembly, the C-terminus of pre-VP2 is further processed by VP4, giving rise to VP2, the external capsid protein and three small peptides that all stay closely associated with the capsid.

It is found in the virion. The protein localises to the host cytoplasm. In terms of biological role, capsid protein VP2 self assembles to form an icosahedral capsid with a T=13 symmetry, about 70 nm in diameter, and consisting of 260 VP2 trimers. The capsid encapsulates the genomic dsRNA. VP2 is also involved in attachment and entry into the host cell by interacting with host ITGA4/ITGB1. The precursor of VP2 plays an important role in capsid assembly. First, pre-VP2 and VP2 oligomers assemble to form a procapsid. Then, the pre-VP2 intermediates may be processed into VP2 proteins by proteolytic cleavage mediated by VP4 to obtain the mature virion. The final capsid is composed of pentamers and hexamers but VP2 has a natural tendency to assemble into all-pentameric structures. Therefore pre-VP2 may be required to allow formation of the hexameric structures. Functionally, protease VP4 is a serine protease that cleaves the polyprotein into its final products. Pre-VP2 is first partially cleaved, and may be completely processed by VP4 upon capsid maturation. Its function is as follows. Capsid protein VP3 plays a key role in virion assembly by providing a scaffold for the capsid made of VP2. May self-assemble to form a T=4-like icosahedral inner-capsid composed of at least 180 trimers. Plays a role in genomic RNA packaging by recruiting VP1 into the capsid and interacting with the dsRNA genome segments to form a ribonucleoprotein complex. Additionally, the interaction of the VP3 C-terminal tail with VP1 removes the inherent structural blockade of the polymerase active site. Thus, VP3 can also function as a transcriptional activator. In terms of biological role, structural peptide 1 is a small peptide derived from pre-VP2 C-terminus. It destabilizes and perforates cell membranes, suggesting a role during entry. Structural peptide 2 is a small peptide derived from pVP2 C-terminus. It is not essential for the virus viability, but viral growth is affected when missing. Functionally, structural peptide 3 is a small peptide derived from pVP2 C-terminus. It is not essential for the virus viability, but viral growth is affected when missing. Its function is as follows. Structural peptide 4 is a small peptide derived from pVP2 C-terminus. It is essential for the virus viability. In Avian infectious bursal disease virus (strain STC) (IBDV), this protein is Structural polyprotein.